The chain runs to 188 residues: Elongation factor P-like protein (188 aa).

The protein belongs to the elongation factor P family.

In Xanthomonas axonopodis pv. citri (strain 306), this protein is Elongation factor P-like protein.